The primary structure comprises 371 residues: MTTITPLHHIRVALERNPYEVVIGNGGLARLGQQMLDAGVQADRRVLVVSNPDVANPYGDACLNSLREAGFSVELLVIDAGEHQKTPATVAEIHDAAYSAKLERSSLMVALGGGVVGDMTGFAAATWLRGIQVVQVPTTLLAMVDASIGGKTGVNHPRGKNLIGAFHQPRLVLIDPSTLNTLPEREFRAGMAEVIKYGILGDTALFEELEACPDPSTPAGLGAERLSSILQRSAAAKARVVAADEKEGSLRAILNYGHTFGHVVETLCGYGTWLHGEAVAIGMVAVGELAVLRGSWSRDDAERQRRLIESAGLPTAWPDLSADAVLNSLQGDKKVRDGRLRFVMPTGIGSVEIRDDVSREEILSCLERLKG.

NAD(+) contacts are provided by residues 114-118, 138-139, Lys-151, Lys-160, and 178-181; these read GVVGD, TT, and TLNT. The Zn(2+) site is built by Glu-193, His-258, and His-275.

The protein belongs to the sugar phosphate cyclases superfamily. Dehydroquinate synthase family. Requires Co(2+) as cofactor. Zn(2+) is required as a cofactor. NAD(+) serves as cofactor.

The protein resides in the cytoplasm. The enzyme catalyses 7-phospho-2-dehydro-3-deoxy-D-arabino-heptonate = 3-dehydroquinate + phosphate. It participates in metabolic intermediate biosynthesis; chorismate biosynthesis; chorismate from D-erythrose 4-phosphate and phosphoenolpyruvate: step 2/7. In terms of biological role, catalyzes the conversion of 3-deoxy-D-arabino-heptulosonate 7-phosphate (DAHP) to dehydroquinate (DHQ). The sequence is that of 3-dehydroquinate synthase from Synechococcus sp. (strain CC9605).